A 485-amino-acid chain; its full sequence is Glutamyl-tRNA(Gln) amidotransferase subunit A (485 aa).

Catalysis depends on charge relay system residues lysine 79 and serine 154. The Acyl-ester intermediate role is filled by serine 178.

Belongs to the amidase family. GatA subfamily. In terms of assembly, heterotrimer of A, B and C subunits.

It catalyses the reaction L-glutamyl-tRNA(Gln) + L-glutamine + ATP + H2O = L-glutaminyl-tRNA(Gln) + L-glutamate + ADP + phosphate + H(+). In terms of biological role, allows the formation of correctly charged Gln-tRNA(Gln) through the transamidation of misacylated Glu-tRNA(Gln) in organisms which lack glutaminyl-tRNA synthetase. The reaction takes place in the presence of glutamine and ATP through an activated gamma-phospho-Glu-tRNA(Gln). This Sulfurihydrogenibium sp. (strain YO3AOP1) protein is Glutamyl-tRNA(Gln) amidotransferase subunit A.